Reading from the N-terminus, the 240-residue chain is Octanoyltransferase (240 aa).

The segment at 1–22 (MGTTGTNDGATTPPANTSTPAV) is disordered. Positions 10–21 (ATTPPANTSTPA) are enriched in low complexity. The 186-residue stretch at 51 to 236 (EKIPDTILLL…NLVDALNGDL (186 aa)) folds into the BPL/LPL catalytic domain. Substrate-binding positions include 89–96 (RGGRITWH), 166–168 (AIG), and 179–181 (GVA). Catalysis depends on C197, which acts as the Acyl-thioester intermediate.

It belongs to the LipB family.

The protein resides in the cytoplasm. It catalyses the reaction octanoyl-[ACP] + L-lysyl-[protein] = N(6)-octanoyl-L-lysyl-[protein] + holo-[ACP] + H(+). It participates in protein modification; protein lipoylation via endogenous pathway; protein N(6)-(lipoyl)lysine from octanoyl-[acyl-carrier-protein]: step 1/2. Catalyzes the transfer of endogenously produced octanoic acid from octanoyl-acyl-carrier-protein onto the lipoyl domains of lipoate-dependent enzymes. Lipoyl-ACP can also act as a substrate although octanoyl-ACP is likely to be the physiological substrate. The polypeptide is Octanoyltransferase (Corynebacterium jeikeium (strain K411)).